Reading from the N-terminus, the 174-residue chain is DNA replication inhibitor plutonium (174 aa).

ANK repeat units follow at residues 39 to 68 (YGNT…NIFA) and 72 to 103 (FGQN…DFNL). Residue Thr167 is modified to Phosphothreonine.

Inhibits DNA replication early in developments. May bind and block the action of a replication or initiation factor. This chain is DNA replication inhibitor plutonium (plu), found in Drosophila melanogaster (Fruit fly).